The following is a 216-amino-acid chain: DDB1- and CUL4-associated factor 16 (216 aa).

Positions 1 to 42 (MGPRNPSPDHLSESESEEEENISYLNESSGEEWDSSEEEDSM) are disordered. Residues 29-41 (SGEEWDSSEEEDS) show a composition bias toward acidic residues. Position 61 is an N6-acetyllysine (lysine 61).

As to quaternary structure, interacts with DDB1 and CUL4A.

The protein resides in the nucleus. Its pathway is protein modification; protein ubiquitination. In terms of biological role, functions as a substrate recognition component for CUL4-DDB1 E3 ubiquitin-protein ligase complex, which mediates ubiquitination and proteasome-dependent degradation of nuclear proteins. In Homo sapiens (Human), this protein is DDB1- and CUL4-associated factor 16.